The chain runs to 329 residues: Flotillin-like protein FloA (329 aa).

2 consecutive transmembrane segments (helical) span residues 4 to 24 (IAFI…FAIV) and 26 to 46 (VGLW…TLIG).

Belongs to the flotillin-like FloA family. Homooligomerizes.

The protein localises to the cell membrane. It localises to the membrane raft. In terms of biological role, found in functional membrane microdomains (FMM) that may be equivalent to eukaryotic membrane rafts. FMMs are highly dynamic and increase in number as cells age. Flotillins are thought to be important factors in membrane fluidity. In Acetivibrio thermocellus (strain ATCC 27405 / DSM 1237 / JCM 9322 / NBRC 103400 / NCIMB 10682 / NRRL B-4536 / VPI 7372) (Clostridium thermocellum), this protein is Flotillin-like protein FloA.